The following is a 420-amino-acid chain: Inheritance of peroxisomes protein 1 (420 aa).

The span at 1-10 (MVLSRGETKK) shows a compositional bias: basic and acidic residues. 2 disordered regions span residues 1–75 (MVLS…QRKR) and 273–309 (SLSD…NYDD). Residues 30–39 (LKQSLKLSNN) are compositionally biased toward low complexity. Residues 45-56 (DSTQHSNDTNKS) are compositionally biased toward polar residues. Phosphoserine is present on serine 273. The span at 295-309 (NNDDDNDDDDDNYDD) shows a compositional bias: acidic residues.

The protein belongs to the INP1 family. Interacts with PEX25, PEX30 and VPS1.

The protein localises to the peroxisome membrane. Functionally, required for peroxisome inheritance. The protein is Inheritance of peroxisomes protein 1 (INP1) of Saccharomyces cerevisiae (strain ATCC 204508 / S288c) (Baker's yeast).